A 151-amino-acid polypeptide reads, in one-letter code: Small ribosomal subunit protein uS9 (151 aa).

The protein belongs to the universal ribosomal protein uS9 family.

The polypeptide is Small ribosomal subunit protein uS9 (rps9) (Aeropyrum pernix (strain ATCC 700893 / DSM 11879 / JCM 9820 / NBRC 100138 / K1)).